A 392-amino-acid polypeptide reads, in one-letter code: Bifunctional enzyme Fae/Hps (392 aa).

Positions 1-161 (MFLVGEALIG…YEKERSVHPV (161 aa)) are formaldehyde-activating enzyme. The active-site Proton donor is the His-17. Positions 19, 48, 66, 68, and 83 each coordinate substrate. A 3-hexulose-6-phosphate synthase region spans residues 162–392 (MGYRVMRLWD…IDQYRIMTDF (231 aa)).

It in the N-terminal section; belongs to the formaldehyde-activating enzyme family. This sequence in the C-terminal section; belongs to the HPS/KGPDC family. HPS subfamily.

It catalyses the reaction 5,6,7,8-tetrahydromethanopterin + formaldehyde = 5,10-methylenetetrahydromethanopterin + H2O. It carries out the reaction D-ribulose 5-phosphate + formaldehyde = D-arabino-hex-3-ulose 6-phosphate. It participates in carbohydrate biosynthesis; D-ribose 5-phosphate biosynthesis. Its function is as follows. Catalyzes the condensation of formaldehyde with tetrahydromethanopterin (H(4)MPT) to 5,10-methylenetetrahydromethanopterin. In terms of biological role, catalyzes the reversible formation of ribulose-5-phosphate and formaldehyde from 3-hexulose-6-phosphate. The chain is Bifunctional enzyme Fae/Hps from Methanothrix thermoacetophila (strain DSM 6194 / JCM 14653 / NBRC 101360 / PT) (Methanosaeta thermophila).